The sequence spans 1005 residues: Translation initiation factor IF-2 (1005 aa).

Disordered regions lie at residues 54–337 (KYVP…RRPQ) and 368–414 (PKPK…PTSV). Residues 58-73 (SPSTHSMPPTRPTSHS) show a composition bias toward polar residues. Residues 75 to 86 (PLPPQPGKPQPK) show a composition bias toward pro residues. Residues 146-157 (GSNSPSHSESTP) are compositionally biased toward polar residues. Low complexity-rich tracts occupy residues 189–198 (PSPAAMAGRA) and 222–240 (VESA…PRAE). The segment covering 258–274 (PRSETSEDGARRGEKLV) has biased composition (basic and acidic residues). The span at 392–401 (GGRKLSRRDR) shows a compositional bias: basic residues. The tr-type G domain maps to 495–668 (RRPPVVTIMG…LLVSEVEDLY (174 aa)). The tract at residues 504–511 (GHVDHGKT) is G1. Residue 504–511 (GHVDHGKT) participates in GTP binding. Residues 529 to 533 (GITQH) form a G2 region. The segment at 554–557 (DTPG) is G3. Residues 554-558 (DTPGH) and 608-611 (NKID) contribute to the GTP site. The interval 608–611 (NKID) is G4. The segment at 644–646 (SAI) is G5.

This sequence belongs to the TRAFAC class translation factor GTPase superfamily. Classic translation factor GTPase family. IF-2 subfamily.

It is found in the cytoplasm. Functionally, one of the essential components for the initiation of protein synthesis. Protects formylmethionyl-tRNA from spontaneous hydrolysis and promotes its binding to the 30S ribosomal subunits. Also involved in the hydrolysis of GTP during the formation of the 70S ribosomal complex. In Cyanothece sp. (strain PCC 7425 / ATCC 29141), this protein is Translation initiation factor IF-2.